Reading from the N-terminus, the 24-residue chain is Large ribosomal subunit protein uL30 (24 aa).

This sequence belongs to the universal ribosomal protein uL30 family. As to quaternary structure, part of the 50S ribosomal subunit.

This chain is Large ribosomal subunit protein uL30 (rpmD), found in Ectopseudomonas mendocina (Pseudomonas mendocina).